The sequence spans 275 residues: MSTGNLDFEQFRVFLEKACGILLGENKQYLVSSRLNKLMEQQGIKSLGELVQRIQAQPRGGLREQVVDAMTTNETLWFRDTYPFEVLKNKVIPEFIRNNPGQRLRMWSAACSSGQEPYSISMAIDEFERSNLGQLKMGAQIVATDLSGTMLTNCKTGEYDSLAIARGLSQERLQRYFDPKGPGRWAVKPAIRSRVEFRSFNLLDSYASLGKFDIVFCRNVLIYFSAQVKKDILLRIHSTLKPGGYLFLGASEALNGLPDHYQMVQCSPGIIYQAK.

Residues 1 to 275 enclose the CheR-type methyltransferase domain; sequence MSTGNLDFEQ…CSPGIIYQAK (275 aa). Residues Asn73, Thr75, Arg79, Glu116, Asp145, 201-202, and 218-219 contribute to the S-adenosyl-L-methionine site; these read NL and RN.

As to quaternary structure, monomer.

The catalysed reaction is L-glutamyl-[protein] + S-adenosyl-L-methionine = [protein]-L-glutamate 5-O-methyl ester + S-adenosyl-L-homocysteine. Functionally, methylation of the membrane-bound methyl-accepting chemotaxis proteins (MCP) to form gamma-glutamyl methyl ester residues in MCP. Methylates the McpS chemotaxis receptor. In Pseudomonas putida (strain ATCC 47054 / DSM 6125 / CFBP 8728 / NCIMB 11950 / KT2440), this protein is Chemotaxis protein methyltransferase Cher2 (cheR2).